Consider the following 200-residue polypeptide: Holliday junction resolvase RecU (200 aa).

Mg(2+) is bound by residues Thr-85, Asp-87, Glu-100, and Gln-119.

It belongs to the RecU family. Mg(2+) is required as a cofactor.

The protein resides in the cytoplasm. It carries out the reaction Endonucleolytic cleavage at a junction such as a reciprocal single-stranded crossover between two homologous DNA duplexes (Holliday junction).. In terms of biological role, endonuclease that resolves Holliday junction intermediates in genetic recombination. Cleaves mobile four-strand junctions by introducing symmetrical nicks in paired strands. Promotes annealing of linear ssDNA with homologous dsDNA. Required for DNA repair, homologous recombination and chromosome segregation. This is Holliday junction resolvase RecU from Bacillus cytotoxicus (strain DSM 22905 / CIP 110041 / 391-98 / NVH 391-98).